Reading from the N-terminus, the 347-residue chain is Heat-inducible transcription repressor HrcA (347 aa).

This sequence belongs to the HrcA family.

Functionally, negative regulator of class I heat shock genes (grpE-dnaK-dnaJ and groELS operons). Prevents heat-shock induction of these operons. This Lactococcus lactis subsp. cremoris (strain MG1363) protein is Heat-inducible transcription repressor HrcA.